A 436-amino-acid chain; its full sequence is Trigger factor (436 aa).

The 86-residue stretch at 161 to 246 folds into the PPIase FKBP-type domain; it reads GDQVIVDFDG…VREVKEPTLP (86 aa).

This sequence belongs to the FKBP-type PPIase family. Tig subfamily.

Its subcellular location is the cytoplasm. The enzyme catalyses [protein]-peptidylproline (omega=180) = [protein]-peptidylproline (omega=0). Involved in protein export. Acts as a chaperone by maintaining the newly synthesized protein in an open conformation. Functions as a peptidyl-prolyl cis-trans isomerase. The chain is Trigger factor from Thioalkalivibrio sulfidiphilus (strain HL-EbGR7).